The chain runs to 664 residues: Intraflagellar transport protein 70A2 (664 aa).

7 TPR repeats span residues 11–44 (DGEF…SSRS), 45–78 (RAGL…HPEL), 153–186 (PDGL…SGYQ), 188–220 (DVSY…GIRQ), 395–423 (QVQE…EKYI), 424–456 (PVLM…CNDH), and 458–491 (VWKL…NYDN). A coiled-coil region spans residues 507 to 534 (YIMTSQNEEAEELMRKIEKEEEQLSYGD). The stretch at 543 to 576 (CIVNLVIGTLYCAKGNYDFGISRVIKSLEPYHKK) is one TPR 8 repeat.

The protein belongs to the TTC30/dfy-1/fleer family. Interacts wit the IFT B complex component IFT52.

The protein resides in the cell projection. Its subcellular location is the cilium. In terms of biological role, required for polyglutamylation of axonemal tubulin. Plays a role in anterograde intraflagellar transport (IFT), the process by which cilia precursors are transported from the base of the cilium to the site of their incorporation at the tip. This Mus musculus (Mouse) protein is Intraflagellar transport protein 70A2 (Ift70a2).